Reading from the N-terminus, the 208-residue chain is MARYTGPSCRLCRRENTELFLKGERCYTDKCAIKRRNYPPGQHGQGRTKTSDYGVQLREKQKVRRIYGILENQFRGYFERADRLKGVTGENLLFLLERRLDNIAYRLGFASSRIEARQLVRHGHFTLNGRKVTIPSIQVKAGDVLELREKSRKVACINESLEAVVRRGIPQWLELDKGAYKGAVKTLPAREDITMPIQEQLIVELYSK.

Positions 98 to 158 (RRLDNIAYRL…EKSRKVACIN (61 aa)) constitute an S4 RNA-binding domain.

This sequence belongs to the universal ribosomal protein uS4 family. Part of the 30S ribosomal subunit. Contacts protein S5. The interaction surface between S4 and S5 is involved in control of translational fidelity.

In terms of biological role, one of the primary rRNA binding proteins, it binds directly to 16S rRNA where it nucleates assembly of the body of the 30S subunit. Functionally, with S5 and S12 plays an important role in translational accuracy. The polypeptide is Small ribosomal subunit protein uS4 (Geotalea uraniireducens (strain Rf4) (Geobacter uraniireducens)).